Here is a 177-residue protein sequence, read N- to C-terminus: Large ribosomal subunit protein uL6 (177 aa).

This sequence belongs to the universal ribosomal protein uL6 family. As to quaternary structure, part of the 50S ribosomal subunit.

Its function is as follows. This protein binds to the 23S rRNA, and is important in its secondary structure. It is located near the subunit interface in the base of the L7/L12 stalk, and near the tRNA binding site of the peptidyltransferase center. This Dichelobacter nodosus (strain VCS1703A) protein is Large ribosomal subunit protein uL6.